A 2193-amino-acid polypeptide reads, in one-letter code: Genome polyprotein (2193 aa).

A disordered region spans residues 1 to 23; sequence MGSQVSTQRSGSHENSNSASEGS. G2 carries N-myristoyl glycine; by host lipidation. Over 2–1503 the chain is Cytoplasmic; sequence GSQVSTQRSG…HLNRAVLVMQ (1502 aa). Residues 566-588 form an amphipathic alpha-helix region; sequence GDPIADMIDQTVNNQVNRSLTAL. Active-site for protease 2A activity residues include H883 and D901. Residues C918 and C920 each coordinate Zn(2+). The For protease 2A activity role is filled by C972. 2 residues coordinate Zn(2+): C978 and H980. Residues 1112 to 1184 are membrane-binding; the sequence is SASWLKKFND…EQSAASQEDL (73 aa). Residues 1112-1250 form an oligomerization region; that stretch reads SASWLKKFND…SPGTGKSLAT (139 aa). An RNA-binding region spans residues 1133-1137; the sequence is SSKIS. The region spanning 1216–1374 is the SF3 helicase domain; it reads EKRMNNYMQF…YKTDLGRLDA (159 aa). Position 1240–1247 (1240–1247) interacts with ATP; the sequence is GSPGTGKS. Zn(2+)-binding residues include C1381, C1392, and C1397. The C4-type; degenerate zinc finger occupies 1381-1397; that stretch reads CTENNTANFKRCSPLVC. Positions 1424-1431 are RNA-binding; sequence EYNNRSAI. Residues 1435–1440 are oligomerization; it reads IEALFQ. Residues 1504 to 1519 lie within the membrane without spanning it; that stretch reads SIATVVAVVSLVYVIY. The Cytoplasmic segment spans residues 1520–2193; the sequence is KLFAGFQGAY…NLRRNWLELF (674 aa). O-(5'-phospho-RNA)-tyrosine is present on Y1529. The Peptidase C3 domain occupies 1549 to 1727; it reads GPSLDFALSL…FCAGLKRGYF (179 aa). Residues H1588, E1619, and C1695 each act as for protease 3C activity in the active site. The region spanning 1958–2074 is the RdRp catalytic domain; sequence GSLFAFDYSG…SYPFPIDCSE (117 aa). Mg(2+) contacts are provided by D1964 and D2060.

The protein belongs to the picornaviruses polyprotein family. As to quaternary structure, interacts with capsid protein VP1 and capsid protein VP3 to form heterotrimeric protomers. Interacts with capsid protein VP0, and capsid protein VP3 to form heterotrimeric protomers. Five protomers subsequently associate to form pentamers which serve as building blocks for the capsid. Interacts with capsid protein VP2, capsid protein VP3 and capsid protein VP4 following cleavage of capsid protein VP0. In terms of assembly, interacts with capsid protein VP1 and capsid protein VP3 in the mature capsid. As to quaternary structure, interacts with capsid protein VP0 and capsid protein VP1 to form heterotrimeric protomers. Five protomers subsequently associate to form pentamers which serve as building blocks for the capsid. Interacts with capsid protein VP4 in the mature capsid. Interacts with protein 2C; this interaction may be important for virion morphogenesis. Interacts with capsid protein VP1 and capsid protein VP3. In terms of assembly, homodimer. As to quaternary structure, homohexamer; forms a hexameric ring structure with 6-fold symmetry characteristic of AAA+ ATPases. Interacts (via N-terminus) with host RTN3 (via reticulon domain); this interaction is important for viral replication. Interacts with capsid protein VP3; this interaction may be important for virion morphogenesis. Interacts with protein 3CD. In terms of assembly, homodimer. Interacts with host GBF1. Interacts (via GOLD domain) with host ACBD3 (via GOLD domain); this interaction allows the formation of a viral protein 3A/ACBD3 heterotetramer with a 2:2 stoichiometry, which will stimulate the recruitment of host PI4KB in order to synthesize PI4P at the viral RNA replication sites. As to quaternary structure, interacts with RNA-directed RNA polymerase. Interacts with host IFIH1/MDA5; this interaction inhibits host IFIH1. In terms of assembly, protein 3CD: Interacts with protein 3AB and with RNA-directed RNA polymerase. As to quaternary structure, interacts with Viral protein genome-linked and with protein 3CD. The cofactor is Mg(2+). In terms of processing, specific enzymatic cleavages in vivo by the viral proteases yield processing intermediates and the mature proteins. Post-translationally, myristoylation is required for the formation of pentamers during virus assembly. Further assembly of 12 pentamers and a molecule of genomic RNA generates the provirion. During virion maturation, immature virions are rendered infectious following cleavage of VP0 into VP4 and VP2. This maturation seems to be an autocatalytic event triggered by the presence of RNA in the capsid and it is followed by a conformational change infectious virion. In terms of processing, myristoylation is required during RNA encapsidation and formation of the mature virus particle. Post-translationally, VPg is uridylylated by the polymerase into VPg-pUpU. This acts as a nucleotide-peptide primer for the genomic RNA replication.

The protein resides in the virion. Its subcellular location is the host cytoplasm. The protein localises to the host cytoplasmic vesicle membrane. It localises to the host nucleus. The catalysed reaction is a ribonucleoside 5'-triphosphate + H2O = a ribonucleoside 5'-diphosphate + phosphate + H(+). It carries out the reaction Selective cleavage of Tyr-|-Gly bond in the picornavirus polyprotein.. The enzyme catalyses RNA(n) + a ribonucleoside 5'-triphosphate = RNA(n+1) + diphosphate. It catalyses the reaction Selective cleavage of Gln-|-Gly bond in the poliovirus polyprotein. In other picornavirus reactions Glu may be substituted for Gln, and Ser or Thr for Gly.. Replication or transcription is subject to high level of random mutations by the nucleotide analog ribavirin. In terms of biological role, forms an icosahedral capsid of pseudo T=3 symmetry with capsid proteins VP2 and VP3. The capsid is 300 Angstroms in diameter, composed of 60 copies of each capsid protein and enclosing the viral positive strand RNA genome. Capsid protein VP1 mainly forms the vertices of the capsid. Capsid protein VP1 interacts with host cell receptor to provide virion attachment to target host cells. This attachment induces virion internalization. After binding to its receptor, the capsid undergoes conformational changes. Capsid protein VP1 N-terminus (that contains an amphipathic alpha-helix) and capsid protein VP4 are externalized. Together, they shape a pore in the host membrane through which viral genome is translocated to host cell cytoplasm. Forms an icosahedral capsid of pseudo T=3 symmetry with capsid proteins VP2 and VP3. The capsid is 300 Angstroms in diameter, composed of 60 copies of each capsid protein and enclosing the viral positive strand RNA genome. Its function is as follows. Lies on the inner surface of the capsid shell. After binding to the host receptor, the capsid undergoes conformational changes. Capsid protein VP4 is released, Capsid protein VP1 N-terminus is externalized, and together, they shape a pore in the host membrane through which the viral genome is translocated into the host cell cytoplasm. Functionally, component of immature procapsids, which is cleaved into capsid proteins VP4 and VP2 after maturation. Allows the capsid to remain inactive before the maturation step. In terms of biological role, cysteine protease that cleaves viral polyprotein and specific host proteins. It is responsible for the autocatalytic cleavage between the P1 and P2 regions, which is the first cleavage occurring in the polyprotein. Also cleaves the host translation initiation factor EIF4G1, in order to shut down the capped cellular mRNA translation. Inhibits the host nucleus-cytoplasm protein and RNA trafficking by cleaving host members of the nuclear pores. Counteracts stress granule formation probably by antagonizing its assembly or promoting its dissassembly. Cleaves and inhibits host IFIH1/MDA5, thereby inhibiting the type-I IFN production and the establishment of the antiviral state. Cleaves and inhibits host MAVS, thereby inhibiting the type-I IFN production and the establishment of the antiviral state. Plays an essential role in the virus replication cycle by acting as a viroporin. Creates a pore in the host endoplasmic reticulum and as a consequence releases Ca2+ in the cytoplasm of infected cell. In turn, high levels of cytoplasmic calcium may trigger membrane trafficking and transport of viral ER-associated proteins to viroplasms, sites of viral genome replication. Its function is as follows. Induces and associates with structural rearrangements of intracellular membranes. Displays RNA-binding, nucleotide binding and NTPase activities. May play a role in virion morphogenesis and viral RNA encapsidation by interacting with the capsid protein VP3. Functionally, localizes the viral replication complex to the surface of membranous vesicles. Together with protein 3CD binds the Cis-Active RNA Element (CRE) which is involved in RNA synthesis initiation. Acts as a cofactor to stimulate the activity of 3D polymerase, maybe through a nucleid acid chaperone activity. In terms of biological role, localizes the viral replication complex to the surface of membranous vesicles. It inhibits host cell endoplasmic reticulum-to-Golgi apparatus transport and causes the disassembly of the Golgi complex, possibly through GBF1 interaction. This would result in depletion of MHC, trail receptors and IFN receptors at the host cell surface. Plays an essential role in viral RNA replication by recruiting ACBD3 and PI4KB at the viral replication sites, thereby allowing the formation of the rearranged membranous structures where viral replication takes place. Acts as a primer for viral RNA replication and remains covalently bound to viral genomic RNA. VPg is uridylylated prior to priming replication into VPg-pUpU. The oriI viral genomic sequence may act as a template for this. The VPg-pUpU is then used as primer on the genomic RNA poly(A) by the RNA-dependent RNA polymerase to replicate the viral genome. During genome replication, the VPg-RNA linkage is removed by the host TDP2, thereby accelerating replication. During the late stage of the replication cycle, host TDP2 is excluded from sites of viral RNA synthesis and encapsidation, allowing for the generation of progeny virions. Its function is as follows. Involved in the viral replication complex and viral polypeptide maturation. It exhibits protease activity with a specificity and catalytic efficiency that is different from protease 3C. Protein 3CD lacks polymerase activity. Protein 3CD binds to the 5'UTR of the viral genome. Functionally, major viral protease that mediates proteolytic processing of the polyprotein. Cleaves host EIF5B, contributing to host translation shutoff. Also cleaves host PABPC1, contributing to host translation shutoff. Binds and inhibits host IFIH1/MDA5, thereby inhibiting the type-I IFN production and the establishment of the antiviral state. Cleaves host MAP3K7/TAK1, resulting in inhibition of TRAF6-triggered NF-kappa-B induction. Cleaves host NLRP1, triggers host N-glycine-mediated degradation of the autoinhibitory NLRP1 N-terminal fragment. In terms of biological role, replicates the viral genomic RNA on the surface of intracellular membranes. May form linear arrays of subunits that propagate along a strong head-to-tail interaction called interface-I. Covalently attaches UMP to a tyrosine of VPg, which is used to prime RNA synthesis. The positive stranded RNA genome is first replicated at virus induced membranous vesicles, creating a dsRNA genomic replication form. This dsRNA is then used as template to synthesize positive stranded RNA genomes. ss(+)RNA genomes are either translated, replicated or encapsidated. In Homo sapiens (Human), this protein is Genome polyprotein.